The sequence spans 150 residues: Ribosome maturation factor RimP (150 aa).

It belongs to the RimP family.

It localises to the cytoplasm. Required for maturation of 30S ribosomal subunits. This Escherichia coli O9:H4 (strain HS) protein is Ribosome maturation factor RimP.